Consider the following 422-residue polypeptide: MAMTAAAVTVPLGVLLRREVTSERMERPDVLCGEAARSRKGEDFTLLLAEAGERVAGDPSTSFSVFALFDGHNGSGAAMYAKKNLLNNLLRAIPSGLSRDEWLAVLPRALVAAFVKTDKDFQAVAETSGTTVTFVVIDEWVVTVASVGDSRCILESADGSLYHLSADHRFDSNQDEVQRVTACGSKVGKLNLVGGPEVGPLRCWPGGLCLSRSIGDMDVGECIIPVPHVKQVKLSNAGGRIIIASDGVWDDLTFEMALECSRGFPSDIAANRIVNEAIHPRGLRDDTTCIVVDILPPEKLAPSPPTKRQGKIVFNNMFRRKHTDVSFILDREYAEPDEVEEIFDDGSAMLSKRLAAGYALQSMFEPFSCAVCQVQLKAGQGISVHSNPLQHEKLQGWQGPFLCQSCNEKKDAIEGKRPPRDS.

The region spanning 45 to 294 (TLLLAEAGER…DDTTCIVVDI (250 aa)) is the PPM-type phosphatase domain. Residues D70, G71, D246, and D285 each contribute to the Mn(2+) site.

Belongs to the PP2C family. The cofactor is Mg(2+). Mn(2+) is required as a cofactor.

It catalyses the reaction O-phospho-L-seryl-[protein] + H2O = L-seryl-[protein] + phosphate. The enzyme catalyses O-phospho-L-threonyl-[protein] + H2O = L-threonyl-[protein] + phosphate. The polypeptide is Probable protein phosphatase 2C 69 (Oryza sativa subsp. japonica (Rice)).